The chain runs to 122 residues: Large ribosomal subunit protein uL14 (122 aa).

The protein belongs to the universal ribosomal protein uL14 family. Part of the 50S ribosomal subunit. Forms a cluster with proteins L3 and L19. In the 70S ribosome, L14 and L19 interact and together make contacts with the 16S rRNA in bridges B5 and B8.

Its function is as follows. Binds to 23S rRNA. Forms part of two intersubunit bridges in the 70S ribosome. This is Large ribosomal subunit protein uL14 from Rickettsia massiliae (strain Mtu5).